The chain runs to 97 residues: UPF0250 protein HD_2015 (97 aa).

This sequence belongs to the UPF0250 family.

The sequence is that of UPF0250 protein HD_2015 from Haemophilus ducreyi (strain 35000HP / ATCC 700724).